The chain runs to 227 residues: Translation initiation factor 6 (227 aa).

This sequence belongs to the eIF-6 family.

Its function is as follows. Binds to the 50S ribosomal subunit and prevents its association with the 30S ribosomal subunit to form the 70S initiation complex. The protein is Translation initiation factor 6 of Methanococcus maripaludis (strain C5 / ATCC BAA-1333).